The primary structure comprises 316 residues: Haloacid dehalogenase-like hydrolase domain-containing protein At4g39970 (316 aa).

Residues 1-46 constitute a chloroplast transit peptide; it reads MAVSCNHSAILFSPSSTAGSSSVTSSSSLIGFPRFQTLRFKSRSVY. Aspartate 69 functions as the Nucleophile in the catalytic mechanism. Mg(2+)-binding residues include aspartate 69, aspartate 71, and aspartate 259. Aspartate 71 serves as the catalytic Proton donor.

It belongs to the HAD-like hydrolase superfamily. DOG/GPP family. Requires Mg(2+) as cofactor.

It localises to the plastid. Its subcellular location is the chloroplast. This Arabidopsis thaliana (Mouse-ear cress) protein is Haloacid dehalogenase-like hydrolase domain-containing protein At4g39970.